The chain runs to 221 residues: Deep sea actinoporin Cjtox II (221 aa).

Residues methionine 1–alanine 19 form the signal peptide. A propeptide spanning residues leucine 20–lysine 42 is cleaved from the precursor. Residues serine 96, valine 129, serine 147, proline 149, tyrosine 175, tyrosine 179, and tyrosine 180 each coordinate phosphocholine. The trp-rich region, which is important for the binding to lipid membrane stretch occupies residues serine 147–lysine 162. The Cell attachment site, crucial for protein stability signature appears at lysine 186–aspartate 188.

The protein belongs to the actinoporin family. Sea anemone subfamily. In terms of assembly, octamer or nonamer in membranes. Monomer in the soluble state. In terms of tissue distribution, expressed in actinopharynx and in gastric filaments. Is not expressed in tentacles.

The protein resides in the secreted. The protein localises to the nematocyst. It localises to the target cell membrane. Its function is as follows. May be involved in digestion of prey. Pore-forming protein that forms cations-selective hydrophilic pores of around 1 nm and causes cytolysis. Pore formation is a multi-step process that involves specific recognition of membrane sphingomyelin (but neither cholesterol nor phosphatidylcholine) using aromatic rich region and adjacent phosphocholine (POC) binding site, firm binding to the membrane (mainly driven by hydrophobic interactions) accompanied by the transfer of the N-terminal region to the lipid-water interface and finally pore formation after oligomerization of monomers. Shows hemolytic activity on equine erythrocytes. Hemolysis is highly inhibited in presence of sphingomyelin, suggesting that this protein targets sphingomyelin. The polypeptide is Deep sea actinoporin Cjtox II (Cribrinopsis japonica (Deep-sea anemone)).